Here is a 254-residue protein sequence, read N- to C-terminus: 5-oxoprolinase subunit A (254 aa).

Belongs to the LamB/PxpA family. As to quaternary structure, forms a complex composed of PxpA, PxpB and PxpC.

The enzyme catalyses 5-oxo-L-proline + ATP + 2 H2O = L-glutamate + ADP + phosphate + H(+). Catalyzes the cleavage of 5-oxoproline to form L-glutamate coupled to the hydrolysis of ATP to ADP and inorganic phosphate. In Gluconobacter oxydans (strain 621H) (Gluconobacter suboxydans), this protein is 5-oxoprolinase subunit A.